A 179-amino-acid polypeptide reads, in one-letter code: Protein PLASTID REDOX INSENSITIVE 2, chloroplastic (179 aa).

The transit peptide at 1 to 69 (MASMHEALFS…SLSRRGFVCR (69 aa)) directs the protein to the chloroplast.

Binds DNA when in complex with CSP41b.

The protein resides in the plastid. The protein localises to the chloroplast stroma. Its subcellular location is the chloroplast nucleoid. In terms of biological role, involved in redox-mediated retrograde signaling to synchronize the expression of photosynthetic genes from both the nuclear and plastidic genomes, especially in excess light conditions. Required for full expression of genes transcribed by the plastid-encoded RNA polymerase (PEP). Essential for embryo development. This is Protein PLASTID REDOX INSENSITIVE 2, chloroplastic from Arabidopsis thaliana (Mouse-ear cress).